A 461-amino-acid polypeptide reads, in one-letter code: Coronin-1A (461 aa).

Ser-2 bears the N-acetylserine mark. At Ser-2 the chain carries Phosphoserine; by PKC. WD repeat units follow at residues 13–63 (HVFG…LVLP), 73–110 (NAPTVCGHTAPVLDIAWCPHNDNVIASGSEDCTVMVWE), 123–160 (PVVTLEGHTKRVGIVAWHTTAQNVLLSAGCDNVIMVWD), 164–204 (GAAM…RIIE), 207–251 (KGTV…ALWD), 258–296 (PLSLQELDTSSGVLLPFFDPDTNIVYLCGKGDSSIRYFE), and 302–349 (PFLH…EPIA). The span at 403 to 418 (ELRVNRGLDTGRRRAA) shows a compositional bias: basic and acidic residues. Positions 403-432 (ELRVNRGLDTGRRRAAPEASGTPSSDAVSR) are disordered. Position 412 is a phosphothreonine; by PKC (Thr-412). Ser-422 is modified (phosphoserine). Residues 424–460 (TPSSDAVSRLEEEMRKLQATVQELQKRLDRLEETVQA) are a coiled coil. Lys-449 is modified (N6-acetyllysine).

The protein belongs to the WD repeat coronin family. Binds actin. Phosphorylation at Thr-412 by PKC strongly down-regulates the association with actin. In terms of processing, polyubiquitinated by RNF128 with 'Lys-48'-linked chains, leading to proteasomal degradation. In terms of tissue distribution, expressed in brain, thymus, spleen, bone marrow and lymph node. Low in lung and gut.

Its subcellular location is the cytoplasm. It is found in the cytoskeleton. The protein resides in the cell cortex. It localises to the cytoplasmic vesicle. The protein localises to the phagosome membrane. In terms of biological role, may be a crucial component of the cytoskeleton of highly motile cells, functioning both in the invagination of large pieces of plasma membrane, as well as in forming protrusions of the plasma membrane involved in cell locomotion. In mycobacteria-infected cells, its retention on the phagosomal membrane prevents fusion between phagosomes and lysosomes. In Homo sapiens (Human), this protein is Coronin-1A (CORO1A).